The following is a 216-amino-acid chain: MSNPRILIVGPPGAGKGTQSANLAEAYGVEHITTGDALRANKDMDISDMDTEYDTPREYMEAGDLVPDAVVNAIVDEALSQADGFVLDGYPRNLEQAEELEGMTALDVILSLDVSREELVDRLTGRRVCDDCGTNYHVEFNQPEEDGVCDECGGDLIQRDDDNEESVRNRLDVFDDNTAPVIDHYGDHDGFVAIDGEQTPDEVWSEIQDAVDAHTA.

13–18 (GAGKGT) contributes to the ATP binding site. The segment at 33–66 (TTGDALRANKDMDISDMDTEYDTPREYMEAGDLV) is NMP. Residues threonine 34, arginine 39, 64 to 66 (DLV), 89 to 92 (GYPR), and glutamine 96 contribute to the AMP site. Residues 125 to 162 (GRRVCDDCGTNYHVEFNQPEEDGVCDECGGDLIQRDDD) form an LID region. Arginine 126 is a binding site for ATP. Zn(2+)-binding residues include cysteine 129, cysteine 132, cysteine 149, and cysteine 152. Residues arginine 159 and arginine 170 each coordinate AMP. Glutamine 198 contacts ATP.

The protein belongs to the adenylate kinase family. Monomer.

The protein localises to the cytoplasm. It catalyses the reaction AMP + ATP = 2 ADP. It participates in purine metabolism; AMP biosynthesis via salvage pathway; AMP from ADP: step 1/1. Functionally, catalyzes the reversible transfer of the terminal phosphate group between ATP and AMP. Plays an important role in cellular energy homeostasis and in adenine nucleotide metabolism. The polypeptide is Adenylate kinase (Haloarcula marismortui (strain ATCC 43049 / DSM 3752 / JCM 8966 / VKM B-1809) (Halobacterium marismortui)).